The following is a 350-amino-acid chain: Putative aminopeptidase MJ0555 (350 aa).

2 residues coordinate a divalent metal cation: H62 and D175. The active-site Proton acceptor is E207. E208, D230, and H321 together coordinate a divalent metal cation.

Belongs to the peptidase M42 family. The cofactor is a divalent metal cation.

In Methanocaldococcus jannaschii (strain ATCC 43067 / DSM 2661 / JAL-1 / JCM 10045 / NBRC 100440) (Methanococcus jannaschii), this protein is Putative aminopeptidase MJ0555.